The primary structure comprises 192 residues: Flavin prenyltransferase UbiX (192 aa).

FMN is bound by residues 10–12, Ser-36, 92–95, and Arg-127; these read GAS and SVAT. Positions 157 and 173 each coordinate dimethylallyl phosphate.

The protein belongs to the UbiX/PAD1 family.

The catalysed reaction is dimethylallyl phosphate + FMNH2 = prenylated FMNH2 + phosphate. In terms of biological role, flavin prenyltransferase that catalyzes the synthesis of the prenylated FMN cofactor (prenyl-FMN) for 4-hydroxy-3-polyprenylbenzoic acid decarboxylase UbiD. The prenyltransferase is metal-independent and links a dimethylallyl moiety from dimethylallyl monophosphate (DMAP) to the flavin N5 and C6 atoms of FMN. The chain is Flavin prenyltransferase UbiX from Chlamydia trachomatis serovar D (strain ATCC VR-885 / DSM 19411 / UW-3/Cx).